The primary structure comprises 2616 residues: MNYNMDEMEATRLLRHPRRWWSIGFGKRIVAISILVIIVLLFSLVYHGLVVEKIDQVQQIAALNARHQVLFNQPFEEDQSALIVSPQTLHFKLLDEDMNKDMEDSKNRRRKHMRQMLVKFRLNKKHRMRRDLHGLDLLDPVRMEANMQHLYTKLRSKRAREALSQLEHEFVRCKKHTPQDCMSAFLRMYKMAKEVTEKMEKMKAIMREQQPKLESSSMESHEQKGTFSPADLIQVTTAEATTVAVHATEKPARTKIKPSRISWIIDGHDHDESPVYTDGAPKKETTKAPWNTTQLVEITTTKIDATATERTTVESTTEKISWILDHFDKPQEILRTTEGPGQRIIRNVTTTSASSEPIVDTENTNSDHVPTTENGLVFNITTDGPVETTKSTAQRKLSFDWILDGEENVEPEVKSTNTTTTTAATTTTGATSETIIVTTELPKITFDWIIDGREVVEPQETTTEVTGTTERLRKMPFDWIIDGEEVVEPQENVTTTTIATTVAVSTTEINERIHNSTAYPTKPKPVKFDWIIDGGESSGEVSTSSTSQPKLTTREAISNPESPRSSHPLDNPTSIENMLESFEQHEEQKPILRVLNANESSSETVTDGYERQLWLKKFEDQARPNQNELIDTFGTALDAKALDKMGPKINPLNGHTWNAADAQILSLCERVALRMRNKVATMSDGETKEKGETFTASPSVQFTSRAPGGFPVSGETMKASAQFMFNPNFGMPSIPVCFYMTPANFRMPMWSNTPTFMGMQGAHFGGSSNPGAGIFFVPQQFGPSGNFFGGSGGSGAGGQGANIFSKNASPQKPTNGQQQVYCSYMQNQSGQGAGQSQTSSQQQQGGQSAFSNANFKMRHANQTNTANQQGQIIYASYAGLPQQPIQERSRCPEPDQFSCFGQQECIPAARWCDNVVDCSDGSDESACTCADRVDEERLCDGYEDCPMGEDELGCFGCESLAYSCYENPQDFAKRNRSTISMCYSRLERCDGFMNCLNGRDEEQCSMLVTDVADHMSHGASASEGYLYHNYRGDWHPVCNNGEKWAALACQMDENSRMDHSASLNVSFQTLTLPGPFIEPSLHAGVHFAQACHGRNSHDSLVDHVAYVKCPPMQCGLPSKSSMLEHSKRVRRAVSDSKEIVGDGRIVGGSYTSALQWPFVVAIYRNGKFHCGGTIYSDRWIISAAHCVINYGKYFYEVRAGLLRRSSYSPATQIQPVSHVVVHQAYERRSMRNDLSLLRLLNPLQFNRWVKPICLPDKGRTTVGDDWIWGPVEHTLCTVVGWGAIREKGPSSDPMRQVIVPIRKKCTDPEDQASEDICAGDPDGGRDACQGDSGGPLFCRSVSNPDEFYLAGVVSHGNGCARPQEFGVYTRVTLYLDWLEMATTPRLLPKLQPLQLCPGFICVWGGKRCIAKRQRCDRNVDCLGGEDEVGCTYNFLPDMVGGVRQNISTTTESDYHPVKESEEKSKMREVIPIDDEDLKAEQDEEDLLKSTTSLGQTETTQGPMDLSFAEQITSTTSDDLSITDETTSTDFTVSDSATSPSTLLPTTTNPSTWLPSTNIETSTFSFTTTESEASTKQETLPTTVAQTTTIPTSTEDLKKLTDLVTEFIESTTFETTMEVETTTLSLTSTDAPKLVTTEGVKETTTTEDTTTISSIVTLTTTPLATISTTILTTEKHVAVTTLAPTTTTESAKTTTTHSSSTHSEKDQIQIPNKFVCKKMSQIVDIMMRCDRKVDCEDGTDELDCTCKDYLKGSLKGLICDGKADCEDLTDEQNCVECQSNEFRCPLSKTCLPLSSRCDNKVDCKFKEDEKDCFALTNGHDVHFDVHQQPKFSSTGIFSRNGHGVWRVVCAHETGYHEHQAKTADAVCALLGFNGAHYFNSSEFVTQHEMQPITPELKGGRNRMSAQIHSMVGDNVQFTENEVIIPELGHPSASRPEKDRLLPRKCVGIYVECNPYSNKTTPLKTFSAGQVVKEKPIEQVPVLSPTIETHNTPNVHFKPQIPAMVVNKKDEILDRLDKLIKSKKNKTILVNEQLHEAIEELHWPWLADVYMNGDLWCIGVLIDKHWVMVHESCLSGIDLETHYVSVLLGGGKTKRSAHRSNHEQIRRVDCFEGVPKSNVLLLHLERPVRFTHHVLPTFLPDSSHQNQSHARQCISVLHDDATGRIKTVAITRIHNATNCDSCYKLQEKQPPANLMRLLNVSAEDMASISEEVELINGVAPTELPAITKFTTCNQFGLKNVSDAHHNPSDQGVLVCRDSHTGWFPTALFNYNNSDCQSFKQPFGIRTLELVYKSLQDIIDKPSCKMLLPAPDCSTHRCPLGTCLPQAAMCNGRSDCHDGSDEEETKCRQQKQQCAPGEMKCRTSFKCVPKSKFCDHVPDCEDMTDEPTICSCFTYLQATDPSKICDGKRNCWDKSDESSVLCNCTADHFQCSSSPEDCIPRDFVCDKEKDCPNGEDERYCFGIEHPLHLQKKDFWTNSQHTQPEIAPQYGQVIEQTYGIWHTKCFPKSKPPQVDEVREICKKLGYNPYRQPSYRLIDDEENKPVHTYELADRQGRSFSNESLMGKYRDSTKALIISKFSPLQLNERLTLFLKSSRPIAELVRWNATDSSMCYRLEIRCA.

The first 43 residues, 1–43 (MNYNMDEMEATRLLRHPRRWWSIGFGKRIVAISILVIIVLLFS), serve as a signal peptide directing secretion. Residues Ser215 and Ser220 each carry the phosphoserine modification. One copy of the WIID 1 repeat lies at 261 to 269 (ISWIIDGHD). Asn291 carries an N-linked (GlcNAc...) asparagine glycan. A WIID 2 repeat occupies 320–328 (ISWILDHFD). Asn347 is a glycosylation site (N-linked (GlcNAc...) asparagine). The segment at 352 to 375 (SASSEPIVDTENTNSDHVPTTENG) is disordered. Residue Asn379 is glycosylated (N-linked (GlcNAc...) asparagine). A WIID 3 repeat occupies 399–407 (FDWILDGEE). Asn417 carries N-linked (GlcNAc...) asparagine glycosylation. 2 WIID repeats span residues 446 to 454 (FDWIIDGRE) and 477 to 485 (FDWIIDGEE). Asn492 and Asn515 each carry an N-linked (GlcNAc...) asparagine glycan. Residues 528-536 (FDWIIDGGE) form a WIID 6 repeat. Residues 537–547 (SSGEVSTSSTS) show a composition bias toward low complexity. The interval 537-574 (SSGEVSTSSTSQPKLTTREAISNPESPRSSHPLDNPTS) is disordered. Positions 548–565 (QPKLTTREAISNPESPRS) are enriched in polar residues. 2 positions are modified to phosphoserine: Ser574 and Ser581. An N-linked (GlcNAc...) asparagine glycan is attached at Asn598. Ser794 carries O-linked (Xyl...) (glycosaminoglycan) serine glycosylation. Residues 798-817 (GQGANIFSKNASPQKPTNGQ) are disordered. Residues 804–817 (FSKNASPQKPTNGQ) are compositionally biased toward polar residues. Residue Asn827 is glycosylated (N-linked (GlcNAc...) asparagine). A glycan (O-linked (Xyl...) (glycosaminoglycan) serine) is linked at Ser829. Asn861 carries N-linked (GlcNAc...) asparagine glycosylation. LDL-receptor class A domains lie at 889 to 929 (SRCP…ACTC) and 955 to 1006 (FGCE…QCSM). 3 disulfides stabilise this stretch: Cys891/Cys905, Cys899/Cys918, and Cys912/Cys927. One can recognise an LDL-receptor class A 2; truncated domain in the interval 929 to 956 (CADRVDEERLCDGYEDCPMGEDELGCFG). 3 cysteine pairs are disulfide-bonded: Cys957/Cys982, Cys964/Cys995, and Cys989/Cys1004. Residue Asn975 is glycosylated (N-linked (GlcNAc...) asparagine). The Cell attachment site motif lies at 1031–1033 (RGD). N-linked (GlcNAc...) asparagine glycosylation is present at Asn1064. Phosphoserine occurs at positions 1134 and 1136. The Peptidase S1 1 domain maps to 1145–1383 (IVGGSYTSAL…YLDWLEMATT (239 aa)). An intrachain disulfide couples Cys1170 to Cys1186. Catalysis depends on charge relay system residues His1185 and Asp1233. 6 disulfides stabilise this stretch: Cys1276/Cys1338, Cys1305/Cys1317, Cys1328/Cys1359, Cys1396/Cys1408, Cys1401/Cys1421, and Cys1415/Cys1430. Ser1332 (charge relay system) is an active-site residue. Positions 1394 to 1432 (QLCPGFICVWGGKRCIAKRQRCDRNVDCLGGEDEVGCTY) constitute an LDL-receptor class A 4 domain. Asn1445 carries N-linked (GlcNAc...) asparagine glycosylation. 2 disordered regions span residues 1530–1557 (FTVS…PSTN) and 1683–1704 (PTTT…HSEK). Low complexity-rich tracts occupy residues 1537–1557 (TSPS…PSTN) and 1683–1700 (PTTT…SSST). The region spanning 1713–1743 (FVCKKMSQIVDIMMRCDRKVDCEDGTDELDC) is the LDL-receptor class A 5; truncated domain. Cystine bridges form between Cys1728/Cys1745, Cys1734/Cys1764, Cys1758/Cys1773, Cys1776/Cys1789, Cys1783/Cys1802, and Cys1796/Cys1811. In terms of domain architecture, LDL-receptor class A 6; truncated spans 1745-1775 (CKDYLKGSLKGLICDGKADCEDLTDEQNCVE). The LDL-receptor class A 7 domain maps to 1774–1813 (VECQSNEFRCPLSKTCLPLSSRCDNKVDCKFKEDEKDCFA). 3 N-linked (GlcNAc...) asparagine glycosylation sites follow: Asn1878, Asn1956, and Asn2023. In terms of domain architecture, Peptidase S1 2 spans 2027 to 2301 (LVNEQLHEAI…LQDIIDKPSC (275 aa)). Residues Cys2055 and Cys2071 are joined by a disulfide bond. Asn2144, Asn2173, Asn2197, Asn2237, and Asn2269 each carry an N-linked (GlcNAc...) asparagine glycan. Cys2177 and Cys2230 are joined by a disulfide. LDL-receptor class A domains are found at residues 2308–2346 (PDCS…KCRQ), 2349–2389 (QQCA…ICSC), and 2419–2459 (CNCT…YCFG). 6 cysteine pairs are disulfide-bonded: Cys2310–Cys2320, Cys2315–Cys2333, Cys2327–Cys2344, Cys2351–Cys2364, Cys2358–Cys2377, and Cys2371–Cys2387. Residues 2387 to 2419 (CSCFTYLQATDPSKICDGKRNCWDKSDESSVLC) enclose the LDL-receptor class A 10; truncated domain. N-linked (GlcNAc...) asparagine glycosylation is present at Asn2420. Disulfide bonds link Cys2421–Cys2435, Cys2428–Cys2448, and Cys2442–Cys2457. N-linked (GlcNAc...) asparagine glycosylation is found at Asn2556 and Asn2601.

The protein belongs to the peptidase S1 family. In terms of processing, requires cleavage for activation (presumably). Follicle.

It is found in the secreted. It localises to the extracellular space. The protein localises to the extracellular matrix. Its function is as follows. Component of the extracellular signaling pathway that establishes the dorsal-ventral pathway of the embryo. A protease cascade involving ndl, gd, snk and ea results in activation of the spz Toll receptor ligand; acts upstream of gd, snk and ea and is required for proteolytic processing of gd. Activation of ea requires activation of the ndl-gd-snk protease cascade and sulfation of a vitelline membrane component by pip. Localized activation of the Toll receptor in the ventral region of the embryo defines cell identities along the dorsal-ventral continuum. In Drosophila melanogaster (Fruit fly), this protein is Serine protease ndl.